Consider the following 892-residue polypeptide: Protein RRP6-like 3 (892 aa).

The 3'-5' exonuclease domain occupies 119–287 (YVWVETESQL…IADSLTTELK (169 aa)). An HRDC domain is found at 350–436 (SLNAEELVRK…CSHLDDIYKM (87 aa)). Positions 785–811 (VDDSGDGTSEGDGAKELNDTQCNGNTL) are disordered.

It is found in the cytoplasm. It localises to the cytosol. The sequence is that of Protein RRP6-like 3 from Arabidopsis thaliana (Mouse-ear cress).